Here is a 196-residue protein sequence, read N- to C-terminus: Glycerol-3-phosphate acyltransferase (196 aa).

Transmembrane regions (helical) follow at residues 4–24 (LTLL…AVVI), 80–100 (PFFL…PLYF), 114–134 (AMFP…LLVF), and 155–175 (AYWI…LILW).

The protein belongs to the PlsY family. As to quaternary structure, probably interacts with PlsX.

It is found in the cell inner membrane. The catalysed reaction is an acyl phosphate + sn-glycerol 3-phosphate = a 1-acyl-sn-glycero-3-phosphate + phosphate. It functions in the pathway lipid metabolism; phospholipid metabolism. Functionally, catalyzes the transfer of an acyl group from acyl-phosphate (acyl-PO(4)) to glycerol-3-phosphate (G3P) to form lysophosphatidic acid (LPA). This enzyme utilizes acyl-phosphate as fatty acyl donor, but not acyl-CoA or acyl-ACP. The sequence is that of Glycerol-3-phosphate acyltransferase from Idiomarina loihiensis (strain ATCC BAA-735 / DSM 15497 / L2-TR).